A 123-amino-acid polypeptide reads, in one-letter code: Small ribosomal subunit protein uS12 (123 aa).

Asp-89 carries the 3-methylthioaspartic acid modification. Positions 100 to 123 (GSLDTSGVKDRKQGRSKYGAKRPK) are disordered. Residues 113–123 (GRSKYGAKRPK) are compositionally biased toward basic residues.

Belongs to the universal ribosomal protein uS12 family. As to quaternary structure, part of the 30S ribosomal subunit. Contacts proteins S8 and S17. May interact with IF1 in the 30S initiation complex.

Functionally, with S4 and S5 plays an important role in translational accuracy. In terms of biological role, interacts with and stabilizes bases of the 16S rRNA that are involved in tRNA selection in the A site and with the mRNA backbone. Located at the interface of the 30S and 50S subunits, it traverses the body of the 30S subunit contacting proteins on the other side and probably holding the rRNA structure together. The combined cluster of proteins S8, S12 and S17 appears to hold together the shoulder and platform of the 30S subunit. This chain is Small ribosomal subunit protein uS12, found in Pseudomonas aeruginosa (strain LESB58).